The primary structure comprises 90 residues: Small ribosomal subunit protein uS17 (90 aa).

It belongs to the universal ribosomal protein uS17 family. As to quaternary structure, part of the 30S ribosomal subunit.

One of the primary rRNA binding proteins, it binds specifically to the 5'-end of 16S ribosomal RNA. This chain is Small ribosomal subunit protein uS17, found in Burkholderia ambifaria (strain ATCC BAA-244 / DSM 16087 / CCUG 44356 / LMG 19182 / AMMD) (Burkholderia cepacia (strain AMMD)).